The primary structure comprises 1407 residues: DNA-directed RNA polymerase subunit beta' (1407 aa).

4 residues coordinate Zn(2+): Cys-70, Cys-72, Cys-85, and Cys-88. 3 residues coordinate Mg(2+): Asp-460, Asp-462, and Asp-464. Cys-814, Cys-888, Cys-895, and Cys-898 together coordinate Zn(2+).

It belongs to the RNA polymerase beta' chain family. The RNAP catalytic core consists of 2 alpha, 1 beta, 1 beta' and 1 omega subunit. When a sigma factor is associated with the core the holoenzyme is formed, which can initiate transcription. The cofactor is Mg(2+). Zn(2+) is required as a cofactor.

The catalysed reaction is RNA(n) + a ribonucleoside 5'-triphosphate = RNA(n+1) + diphosphate. Functionally, DNA-dependent RNA polymerase catalyzes the transcription of DNA into RNA using the four ribonucleoside triphosphates as substrates. The sequence is that of DNA-directed RNA polymerase subunit beta' from Erwinia tasmaniensis (strain DSM 17950 / CFBP 7177 / CIP 109463 / NCPPB 4357 / Et1/99).